Reading from the N-terminus, the 147-residue chain is MPTYSPKAGDVTRQWYVIDATDVVLGRLAVQAANLLRGKNKPTYAPHVDGGDFVIIINAEKVAISGNKRQDKLIHHHSGHPGGLKSRTVGQVLETRPERLVEKAVKGMIPKNKLGNAIAGKLKVYAGPNHPHAAQQPVPFEIKQVAQ.

It belongs to the universal ribosomal protein uL13 family. In terms of assembly, part of the 50S ribosomal subunit.

Its function is as follows. This protein is one of the early assembly proteins of the 50S ribosomal subunit, although it is not seen to bind rRNA by itself. It is important during the early stages of 50S assembly. This is Large ribosomal subunit protein uL13 from Nocardia farcinica (strain IFM 10152).